The chain runs to 189 residues: Small ribosomal subunit protein uS5 (189 aa).

The S5 DRBM domain maps to 20–83 (FVDRLVHINR…ESAKRALIRV (64 aa)).

It belongs to the universal ribosomal protein uS5 family. In terms of assembly, part of the 30S ribosomal subunit. Contacts proteins S4 and S8.

Functionally, with S4 and S12 plays an important role in translational accuracy. In terms of biological role, located at the back of the 30S subunit body where it stabilizes the conformation of the head with respect to the body. This Beijerinckia indica subsp. indica (strain ATCC 9039 / DSM 1715 / NCIMB 8712) protein is Small ribosomal subunit protein uS5.